Here is a 192-residue protein sequence, read N- to C-terminus: Large ribosomal subunit protein bL25 (192 aa).

The protein belongs to the bacterial ribosomal protein bL25 family. CTC subfamily. In terms of assembly, part of the 50S ribosomal subunit; part of the 5S rRNA/L5/L18/L25 subcomplex. Contacts the 5S rRNA. Binds to the 5S rRNA independently of L5 and L18.

Its function is as follows. This is one of the proteins that binds to the 5S RNA in the ribosome where it forms part of the central protuberance. The sequence is that of Large ribosomal subunit protein bL25 from Cytophaga hutchinsonii (strain ATCC 33406 / DSM 1761 / CIP 103989 / NBRC 15051 / NCIMB 9469 / D465).